We begin with the raw amino-acid sequence, 107 residues long: MITLTESAKSAVTRFISSTGKPIAGLRIRVEGGGCSGLKYSLKLEEAGAEDDQLVDCDGITLLIDSASAPLLDGVTMDFVESMEGSGFTFVNPNATNSCGCGKSFAC.

The protein belongs to the HesB/IscA family.

This is an uncharacterized protein from Azotobacter vinelandii.